The sequence spans 404 residues: Probable eukaryotic initiation factor 4A (404 aa).

Residues Met-1–Phe-28 form a disordered region. A Q motif motif is present at residues Pro-26–Gln-54. The 175-residue stretch at Ile-57 to Ile-231 folds into the Helicase ATP-binding domain. Ala-70–Thr-77 provides a ligand contact to ATP. The DEAD box motif lies at Asp-179–Asp-182. The Helicase C-terminal domain maps to Gly-242–Leu-402.

This sequence belongs to the DEAD box helicase family. eIF4A subfamily. As to quaternary structure, eIF4F is a multi-subunit complex, the composition of which varies with external and internal environmental conditions. It is composed of at least EIF4A, EIF4E and EIF4G.

It carries out the reaction ATP + H2O = ADP + phosphate + H(+). Its function is as follows. ATP-dependent RNA helicase which is a subunit of the eIF4F complex involved in cap recognition and is required for mRNA binding to ribosome. In the current model of translation initiation, eIF4A unwinds RNA secondary structures in the 5'-UTR of mRNAs which is necessary to allow efficient binding of the small ribosomal subunit, and subsequent scanning for the initiator codon. This chain is Probable eukaryotic initiation factor 4A, found in Trypanosoma brucei brucei (strain 927/4 GUTat10.1).